Here is a 596-residue protein sequence, read N- to C-terminus: Proline--tRNA ligase (596 aa).

Belongs to the class-II aminoacyl-tRNA synthetase family. ProS type 1 subfamily. Homodimer.

It is found in the cytoplasm. The catalysed reaction is tRNA(Pro) + L-proline + ATP = L-prolyl-tRNA(Pro) + AMP + diphosphate. Catalyzes the attachment of proline to tRNA(Pro) in a two-step reaction: proline is first activated by ATP to form Pro-AMP and then transferred to the acceptor end of tRNA(Pro). As ProRS can inadvertently accommodate and process non-cognate amino acids such as alanine and cysteine, to avoid such errors it has two additional distinct editing activities against alanine. One activity is designated as 'pretransfer' editing and involves the tRNA(Pro)-independent hydrolysis of activated Ala-AMP. The other activity is designated 'posttransfer' editing and involves deacylation of mischarged Ala-tRNA(Pro). The misacylated Cys-tRNA(Pro) is not edited by ProRS. In Prochlorococcus marinus (strain NATL2A), this protein is Proline--tRNA ligase.